Consider the following 176-residue polypeptide: BPTI/Kunitz inhibitor domain-containing protein C02F12.5 (176 aa).

A signal peptide spans 1–17; that stretch reads MLFFTLLIQLFLVPVLC. One can recognise a BPTI/Kunitz inhibitor domain in the interval 21–74; that stretch reads CSSELKFGTACSENKTSTKWYYDSKLLFCYPYKYLGCGEGSNSFESNENCLESC. Cystine bridges form between Cys21/Cys74, Cys31/Cys57, and Cys49/Cys70. The N-linked (GlcNAc...) asparagine glycan is linked to Asn34.

The chain is BPTI/Kunitz inhibitor domain-containing protein C02F12.5 from Caenorhabditis elegans.